Here is a 379-residue protein sequence, read N- to C-terminus: Cytochrome b (379 aa).

The next 4 helical transmembrane spans lie at 34-54, 78-99, 114-134, and 179-199; these read YGSL…FLSM, WLLR…YLHA, WNIG…GYVL, and FFAF…LHIM. The heme b site is built by His-84 and His-98. Positions 183 and 197 each coordinate heme b. Position 202 (His-202) interacts with a ubiquinone. The next 4 membrane-spanning stretches (helical) occupy residues 227-247, 289-309, 321-341, and 349-369; these read IKDT…VLFE, LGGV…PLTS, LNKT…WIGG, and IIIG…SPTI.

This sequence belongs to the cytochrome b family. As to quaternary structure, the main subunits of complex b-c1 are: cytochrome b, cytochrome c1 and the Rieske protein. Requires heme b as cofactor.

It is found in the mitochondrion inner membrane. Component of the ubiquinol-cytochrome c reductase complex (complex III or cytochrome b-c1 complex) that is part of the mitochondrial respiratory chain. The b-c1 complex mediates electron transfer from ubiquinol to cytochrome c. Contributes to the generation of a proton gradient across the mitochondrial membrane that is then used for ATP synthesis. The protein is Cytochrome b (MT-CYB) of Lumbricus terrestris (Common earthworm).